A 299-amino-acid chain; its full sequence is Serine/threonine-protein kinase 1 (299 aa).

In terms of domain architecture, Protein kinase spans 39–277 (IATKPMFEGG…FKGLVSHPWF (239 aa)). Residues 45–53 (FEGGRRNNV) and lysine 66 each bind ATP. Aspartate 153 serves as the catalytic Proton acceptor.

The protein belongs to the protein kinase superfamily. Ser/Thr protein kinase family.

The protein resides in the virion. It is found in the host cytoplasm. The enzyme catalyses L-seryl-[protein] + ATP = O-phospho-L-seryl-[protein] + ADP + H(+). It catalyses the reaction L-threonyl-[protein] + ATP = O-phospho-L-threonyl-[protein] + ADP + H(+). In terms of biological role, essential for viral replication. It may mediate the virus progression through DNA replication. This African swine fever virus (isolate Tick/Malawi/Lil 20-1/1983) (ASFV) protein is Serine/threonine-protein kinase 1.